Consider the following 491-residue polypeptide: MSFKNNLKLLLSTQNVLIYILNSEEERLEYKIHLMIRQNIKKTIYCWNFIDGYYNNPNYLNKAIRNPLQAIEFIEQLNFPTSTIFFLKDFHVFINDISVIRKIKNLSRFLKQANSSIIISASEMQVPSLLKDFITVLEFPLPNYEEINLELHRLFKIMNVDSSIYSEYFHDLTLAYRGFSIEKIRISIAKLLTSNLSSTHLIKNILYEKRQLIEQTDVLEFYAVDYSFDNVGGLNVLKDWLNKRSKAFSKQAKNYGLTVPKGILLIGIQGTGKSLIAKAISGQWNLPLLKLDMGKIFASLVGQSEERMRHMIKTAEQSSPCILWIDEIDKCFTRLNNYTDSGTNGRVLSTMLTWLSEKKKPVFVIATANQVLSLPSELLRKGRFDEIFFLNLPSLEEREKIFQIHLMKFRPLSWRKYDIKYLSKLTDQFSGAEIEQAIIEAMYNAFYEKREFSTQDIINAINNFVPLAFTDTCNISAIQDWAISGKIRMAS.

267-274 (GIQGTGKS) contacts ATP.

The protein belongs to the AAA ATPase family. Highly divergent.

It is found in the plastid. Its subcellular location is the chloroplast. This is an uncharacterized protein from Gracilaria tenuistipitata var. liui (Red alga).